A 702-amino-acid polypeptide reads, in one-letter code: Elongation factor G (702 aa).

A tr-type G domain is found at 8-286 (DKVRNIGIIA…AVVEYLPSPL (279 aa)). GTP-binding positions include 17–24 (AHIDAGKT), 85–89 (DTPGH), and 139–142 (NKMD).

It belongs to the TRAFAC class translation factor GTPase superfamily. Classic translation factor GTPase family. EF-G/EF-2 subfamily.

The protein localises to the cytoplasm. Catalyzes the GTP-dependent ribosomal translocation step during translation elongation. During this step, the ribosome changes from the pre-translocational (PRE) to the post-translocational (POST) state as the newly formed A-site-bound peptidyl-tRNA and P-site-bound deacylated tRNA move to the P and E sites, respectively. Catalyzes the coordinated movement of the two tRNA molecules, the mRNA and conformational changes in the ribosome. This chain is Elongation factor G, found in Chloroflexus aurantiacus (strain ATCC 29366 / DSM 635 / J-10-fl).